The sequence spans 507 residues: ATP synthase subunit alpha (507 aa).

168–175 (GDRKTGKT) lines the ATP pocket.

The protein belongs to the ATPase alpha/beta chains family. In terms of assembly, F-type ATPases have 2 components, CF(1) - the catalytic core - and CF(0) - the membrane proton channel. CF(1) has five subunits: alpha(3), beta(3), gamma(1), delta(1), epsilon(1). CF(0) has three main subunits: a(1), b(2) and c(9-12). The alpha and beta chains form an alternating ring which encloses part of the gamma chain. CF(1) is attached to CF(0) by a central stalk formed by the gamma and epsilon chains, while a peripheral stalk is formed by the delta and b chains.

It is found in the cell inner membrane. It carries out the reaction ATP + H2O + 4 H(+)(in) = ADP + phosphate + 5 H(+)(out). Functionally, produces ATP from ADP in the presence of a proton gradient across the membrane. The alpha chain is a regulatory subunit. The sequence is that of ATP synthase subunit alpha from Ehrlichia ruminantium (strain Gardel).